Reading from the N-terminus, the 1836-residue chain is Druantia protein DruE (1836 aa).

One can recognise a Helicase ATP-binding domain in the interval 108–405 (SFLGEDASDL…FAQDLTGLSP (298 aa)). 121–128 (TGTGSGKT) provides a ligand contact to ATP. Residues 347 to 350 (DEAH) carry the DEAH box motif. The Helicase C-terminal domain occupies 1014 to 1199 (DCTALMPFAL…EVKVNNPKIA (186 aa)).

Its subcellular location is the cytoplasm. Functionally, component of antiviral defense system Druantia type I, composed of DruA, DruB, DruC, DruD and DruE. Expression of Druantia in E.coli (strain MG1655) confers resistance to phage lambda, SECphi18, SECphi27 and T4. This protein is probably a helicase. The sequence is that of Druantia protein DruE from Escherichia coli (strain UMEA 4076-1).